The following is a 348-amino-acid chain: MVLLAQGACCSNQWLAAVLLSLCSCLPAGQSVDFPWAAVDNMLVRKGDTAVLRCYLEDGASKGAWLNRSSIIFAGGDKWSVDPRVSISTLNKRDYSLQIQNVDVTDDGPYTCSVQTQHTPRTMQVHLTVQVPPKIYDISNDMTINEGTNVTLTCLATGKPEPVISWRHISPSAKPFENGQYLDIYGITRDQAGEYECSAENDVSFPDVKKVRVIVNFAPTIQEIKSGTVTPGRSGLIRCEGAGVPPPAFEWYKGEKRLFNGQQGIIIQNFSTRSILTVTNVTQEHFGNYTCVAANKLGTTNASLPLNPPSTAQYGITGSACDLFSCWSLALTLSSVISIFYLKNAILQ.

A signal peptide spans 1 to 31 (MVLLAQGACCSNQWLAAVLLSLCSCLPAGQS). Ig-like C2-type domains follow at residues 32-128 (VDFP…VHLT), 133-215 (PKIY…RVIV), and 219-307 (PTIQ…LPLN). Residues C54 and C112 are joined by a disulfide bond. N67 and N149 each carry an N-linked (GlcNAc...) asparagine glycan. Disulfide bonds link C154/C197 and C239/C291. The residue at position 181 (Y181) is a Phosphotyrosine. N269, N280, N288, and N301 each carry an N-linked (GlcNAc...) asparagine glycan. The GPI-anchor amidated glycine moiety is linked to residue G318. Positions 319-348 (SACDLFSCWSLALTLSSVISIFYLKNAILQ) are cleaved as a propeptide — removed in mature form.

It belongs to the immunoglobulin superfamily. IgLON family. As to expression, expressed in brain.

The protein resides in the cell membrane. In terms of biological role, may be involved in cell-adhesion. May function as a trans-neural growth-promoting factor in regenerative axon sprouting in the mammalian brain. In Mus musculus (Mouse), this protein is Neuronal growth regulator 1 (Negr1).